The primary structure comprises 237 residues: MSDSQPGSTSSTGGKSDSGYIPGDDTWTQWRNIFAILTGKMTDEGKEQFRIARDIRNEAADCKRCEDQRDYLLQYSPIIRFLSDNIRQLGGDLSSHNIYCRRCTSRKAGGFDPEYGILLCANEMKDQGHLEDTMAHEMVHAYDHLRFKVDWTDNLRHAACTEIRASSLSGECRWAREFFRRGQWKFTQQHQECVRRRAILSVRARPGCKDEAHAEKVVNEVWDSCFRDTRPFDEIYR.

Low complexity predominate over residues Met-1–Gly-19. Positions Met-1–Gly-23 are disordered. His-136 contributes to the a divalent metal cation binding site. Glu-137 is an active-site residue. His-140 contributes to the a divalent metal cation binding site.

Belongs to the peptidase M76 family.

It localises to the mitochondrion inner membrane. Its function is as follows. Has a dual role in the assembly of mitochondrial ATPase. Acts as a protease that removes N-terminal residues of mitochondrial ATPase CF(0) subunit 6 at the intermembrane space side. Also involved in the correct assembly of the membrane-embedded ATPase CF(0) particle, probably mediating association of subunit 6 with the subunit 9 ring. The polypeptide is Mitochondrial inner membrane protease atp23 (atp23) (Neosartorya fischeri (strain ATCC 1020 / DSM 3700 / CBS 544.65 / FGSC A1164 / JCM 1740 / NRRL 181 / WB 181) (Aspergillus fischerianus)).